A 382-amino-acid polypeptide reads, in one-letter code: O-antigen polymerase (382 aa).

Over 1–3 (MNN) the chain is Cytoplasmic. A helical transmembrane segment spans residues 4-22 (INKIFITFLCIELIIGGGG). The Periplasmic portion of the chain corresponds to 23-34 (RLLEPLGIFPLR). Residues 35 to 54 (YLLFVFSFILLIFNLVTFNF) form a helical membrane-spanning segment. The Cytoplasmic portion of the chain corresponds to 55 to 62 (SITQKCVS). The helical transmembrane segment at 63-81 (LFIWLLLFPFYGFFVGLLA) threads the bilayer. The Periplasmic segment spans residues 82 to 94 (GNKINDILFDVQP). The helical transmembrane segment at 95–112 (YLFMLSLIYLFTLRYTLK) threads the bilayer. Over 113–125 (VFSCEIFIKIVNA) the chain is Cytoplasmic. A helical transmembrane segment spans residues 126–146 (FALYGSLLYISYIILLNFGLL). Over 147–167 (NFNLIYEHLSLTSEFFFRPDG) the chain is Periplasmic. Residues 168 to 187 (AFFSKSFYFFGVGAIISFVD) traverse the membrane as a helical segment. Topologically, residues 188–189 (KK) are cytoplasmic. A helical transmembrane segment spans residues 190 to 206 (YLKCLIIVLAILLTESR). Over 207–208 (GV) the chain is Periplasmic. The helical transmembrane segment at 209-226 (LLFTTLSLLLASFKLHKL) threads the bilayer. The Cytoplasmic segment spans residues 227–229 (YLN). Residues 230–247 (TIIIILGSVLFIIMLYMV) traverse the membrane as a helical segment. Residues 248-300 (GSRSEDSDSVRFNDLYFYYKNVDLATFLFGRGFGSFILDRLRIEIVPLEILQK) lie on the Periplasmic side of the membrane. A helical membrane pass occupies residues 301–318 (TGVIGVFISLVPMLLIFL). Residues 319-329 (KGYFLNSTKTS) lie on the Cytoplasmic side of the membrane. A helical transmembrane segment spans residues 330 to 349 (LMMSLILFFSITVSITNPFL). At 350–352 (FTP) the chain is on the periplasmic side. The helical transmembrane segment at 353-370 (MGIFIIGVVVLWVFSIEN) threads the bilayer. Residues 371–382 (IQISNNLTSGAK) are Cytoplasmic-facing.

The protein resides in the cell inner membrane. The enzyme catalyses n lipid-linked O-antigen repeat units = a lipid-linked O antigen + (n-1) polyisoprenyl diphosphate.. It participates in bacterial outer membrane biogenesis; LPS O-antigen biosynthesis. In terms of biological role, polymerase involved in the biosynthesis of the lipopolysaccharide (LPS). Catalyzes the polymerization of the O-antigen repeat units on the periplasmic face of the inner membrane, leading to the formation of the lipid-linked O-antigen molecule. The protein is O-antigen polymerase of Shigella flexneri.